The following is an 860-amino-acid chain: Valine--tRNA ligase (860 aa).

Positions Pro53–His63 match the 'HIGH' region motif. The 'KMSKS' region signature appears at Lys527 to Ser531. Lys530 contributes to the ATP binding site. Residues Gln794–Lys860 adopt a coiled-coil conformation.

It belongs to the class-I aminoacyl-tRNA synthetase family. ValS type 1 subfamily. Monomer.

It is found in the cytoplasm. It catalyses the reaction tRNA(Val) + L-valine + ATP = L-valyl-tRNA(Val) + AMP + diphosphate. In terms of biological role, catalyzes the attachment of valine to tRNA(Val). As ValRS can inadvertently accommodate and process structurally similar amino acids such as threonine, to avoid such errors, it has a 'posttransfer' editing activity that hydrolyzes mischarged Thr-tRNA(Val) in a tRNA-dependent manner. In Mycoplasmoides gallisepticum (strain R(low / passage 15 / clone 2)) (Mycoplasma gallisepticum), this protein is Valine--tRNA ligase.